The sequence spans 339 residues: Phenylalanine--tRNA ligase alpha subunit (339 aa).

Mg(2+) is bound at residue Glu-254.

It belongs to the class-II aminoacyl-tRNA synthetase family. Phe-tRNA synthetase alpha subunit type 1 subfamily. In terms of assembly, tetramer of two alpha and two beta subunits. Mg(2+) is required as a cofactor.

The protein localises to the cytoplasm. It catalyses the reaction tRNA(Phe) + L-phenylalanine + ATP = L-phenylalanyl-tRNA(Phe) + AMP + diphosphate + H(+). This Clostridium botulinum (strain Langeland / NCTC 10281 / Type F) protein is Phenylalanine--tRNA ligase alpha subunit.